Reading from the N-terminus, the 593-residue chain is Chaperone protein DnaK (593 aa).

The residue at position 181 (T181) is a Phosphothreonine; by autocatalysis.

Belongs to the heat shock protein 70 family.

In terms of biological role, acts as a chaperone. The chain is Chaperone protein DnaK from Mycoplasmoides gallisepticum (strain R(low / passage 15 / clone 2)) (Mycoplasma gallisepticum).